Here is a 396-residue protein sequence, read N- to C-terminus: Elongation factor Tu (396 aa).

Positions 10-206 (KPHVNVGTIG…ALDNYIPLPE (197 aa)) constitute a tr-type G domain. Residues 19–26 (GHVDHGKT) form a G1 region. 19 to 26 (GHVDHGKT) lines the GTP pocket. A Mg(2+)-binding site is contributed by Thr26. The G2 stretch occupies residues 60–64 (GITIN). The interval 81–84 (DCPG) is G3. GTP-binding positions include 81–85 (DCPGH) and 136–139 (NKCD). A G4 region spans residues 136–139 (NKCD). The interval 174–176 (SAK) is G5.

Belongs to the TRAFAC class translation factor GTPase superfamily. Classic translation factor GTPase family. EF-Tu/EF-1A subfamily. Monomer.

It localises to the cytoplasm. The enzyme catalyses GTP + H2O = GDP + phosphate + H(+). GTP hydrolase that promotes the GTP-dependent binding of aminoacyl-tRNA to the A-site of ribosomes during protein biosynthesis. The polypeptide is Elongation factor Tu (Polaromonas naphthalenivorans (strain CJ2)).